We begin with the raw amino-acid sequence, 131 residues long: Small ribosomal subunit protein uS8 (131 aa).

Belongs to the universal ribosomal protein uS8 family. In terms of assembly, part of the 30S ribosomal subunit. Contacts proteins S5 and S12.

In terms of biological role, one of the primary rRNA binding proteins, it binds directly to 16S rRNA central domain where it helps coordinate assembly of the platform of the 30S subunit. This chain is Small ribosomal subunit protein uS8, found in Shewanella amazonensis (strain ATCC BAA-1098 / SB2B).